A 95-amino-acid chain; its full sequence is Opiscorpine-2 (95 aa).

The signal sequence occupies residues 1–19 (MNNKLTALIFHGLLAIASC). A BetaSPN-type CS-alpha/beta domain is found at 55-95 (EFMCMANMDPTGSCETHCQKASGEKGYCHGTKCKCGVPLSY). 3 disulfide bridges follow: Cys58/Cys82, Cys68/Cys87, and Cys72/Cys89.

The protein belongs to the long chain scorpion toxin family. Class 3 subfamily. As to expression, expressed by the venom gland.

Its subcellular location is the secreted. Has antimicrobial activity against yeasts and bacteria. The polypeptide is Opiscorpine-2 (Opistophthalmus carinatus (African yellow leg scorpion)).